The primary structure comprises 111 residues: UPF0122 protein YofM (111 aa).

Belongs to the UPF0122 family.

Functionally, might take part in the signal recognition particle (SRP) pathway. This is inferred from the conservation of its genetic proximity to ftsY/ffh. May be a regulatory protein. This chain is UPF0122 protein YofM (yofM), found in Lactococcus lactis subsp. lactis (strain IL1403) (Streptococcus lactis).